We begin with the raw amino-acid sequence, 130 residues long: Small ribosomal subunit protein uS11 (130 aa).

It belongs to the universal ribosomal protein uS11 family. As to quaternary structure, part of the 30S ribosomal subunit. Interacts with proteins S7 and S18. Binds to IF-3.

In terms of biological role, located on the platform of the 30S subunit, it bridges several disparate RNA helices of the 16S rRNA. Forms part of the Shine-Dalgarno cleft in the 70S ribosome. The polypeptide is Small ribosomal subunit protein uS11 (Campylobacter hominis (strain ATCC BAA-381 / DSM 21671 / CCUG 45161 / LMG 19568 / NCTC 13146 / CH001A)).